The following is a 456-amino-acid chain: Dolichyl-diphosphooligosaccharide--protein glycosyltransferase 48 kDa subunit (456 aa).

An N-terminal signal peptide occupies residues 1–42 (MGYFRCARAGSFGRRRKMEPSTAARAWALFWLLLPLLGAVCA). The Lumenal segment spans residues 43-427 (SGPRTLVLLD…YERFIPSAYP (385 aa)). The helical transmembrane segment at 428 to 447 (YYASAFSMMLGLFIFSIVFL) threads the bilayer. Residues 448–456 (HMKEKEKSD) lie on the Cytoplasmic side of the membrane.

The protein belongs to the DDOST 48 kDa subunit family. In terms of assembly, component of the oligosaccharyltransferase (OST) complex. OST exists in two different complex forms which contain common core subunits RPN1, RPN2, OST48, OST4, DAD1 and TMEM258, either STT3A or STT3B as catalytic subunits, and form-specific accessory subunits. STT3A complex assembly occurs through the formation of 3 subcomplexes. Subcomplex 1 contains RPN1 and TMEM258, subcomplex 2 contains the STT3A-specific subunits STT3A, DC2/OSTC, and KCP2 as well as the core subunit OST4, and subcomplex 3 contains RPN2, DAD1, and OST48. The STT3A complex can form stable complexes with the Sec61 complex or with both the Sec61 and TRAP complexes. Interacts with SMIM22.

Its subcellular location is the endoplasmic reticulum membrane. The protein operates within protein modification; protein glycosylation. Subunit of the oligosaccharyl transferase (OST) complex that catalyzes the initial transfer of a defined glycan (Glc(3)Man(9)GlcNAc(2) in eukaryotes) from the lipid carrier dolichol-pyrophosphate to an asparagine residue within an Asn-X-Ser/Thr consensus motif in nascent polypeptide chains, the first step in protein N-glycosylation. N-glycosylation occurs cotranslationally and the complex associates with the Sec61 complex at the channel-forming translocon complex that mediates protein translocation across the endoplasmic reticulum (ER). All subunits are required for a maximal enzyme activity. Required for the assembly of both SST3A- and SS3B-containing OST complexes. The polypeptide is Dolichyl-diphosphooligosaccharide--protein glycosyltransferase 48 kDa subunit (Homo sapiens (Human)).